Consider the following 126-residue polypeptide: Iron-sulfur cluster insertion protein ErpA (126 aa).

The segment at 1–21 is disordered; it reads MNQPANQFNPSSSQPVDPTVL. Positions 54, 118, and 120 each coordinate iron-sulfur cluster.

Belongs to the HesB/IscA family. In terms of assembly, homodimer. Iron-sulfur cluster serves as cofactor.

In terms of biological role, required for insertion of 4Fe-4S clusters for at least IspG. This chain is Iron-sulfur cluster insertion protein ErpA, found in Psychrobacter arcticus (strain DSM 17307 / VKM B-2377 / 273-4).